The primary structure comprises 225 residues: NAD(P)H-quinone oxidoreductase subunit K, chloroplastic (225 aa).

The [4Fe-4S] cluster site is built by Cys43, Cys44, Cys108, and Cys139.

The protein belongs to the complex I 20 kDa subunit family. NDH is composed of at least 16 different subunits, 5 of which are encoded in the nucleus. It depends on [4Fe-4S] cluster as a cofactor.

The protein localises to the plastid. Its subcellular location is the chloroplast thylakoid membrane. The enzyme catalyses a plastoquinone + NADH + (n+1) H(+)(in) = a plastoquinol + NAD(+) + n H(+)(out). The catalysed reaction is a plastoquinone + NADPH + (n+1) H(+)(in) = a plastoquinol + NADP(+) + n H(+)(out). Its function is as follows. NDH shuttles electrons from NAD(P)H:plastoquinone, via FMN and iron-sulfur (Fe-S) centers, to quinones in the photosynthetic chain and possibly in a chloroplast respiratory chain. The immediate electron acceptor for the enzyme in this species is believed to be plastoquinone. Couples the redox reaction to proton translocation, and thus conserves the redox energy in a proton gradient. The polypeptide is NAD(P)H-quinone oxidoreductase subunit K, chloroplastic (Manihot esculenta (Cassava)).